The chain runs to 278 residues: Undecaprenyl-diphosphatase (278 aa).

8 consecutive transmembrane segments (helical) span residues G14–F34, G40–W60, W89–I109, T121–E141, L153–V173, F196–L216, V227–L247, and S257–A277.

Belongs to the UppP family.

Its subcellular location is the cell membrane. It catalyses the reaction di-trans,octa-cis-undecaprenyl diphosphate + H2O = di-trans,octa-cis-undecaprenyl phosphate + phosphate + H(+). In terms of biological role, catalyzes the dephosphorylation of undecaprenyl diphosphate (UPP). Confers resistance to bacitracin. This chain is Undecaprenyl-diphosphatase, found in Thermomicrobium roseum (strain ATCC 27502 / DSM 5159 / P-2).